Reading from the N-terminus, the 156-residue chain is Small ribosomal subunit protein uS7 (156 aa).

This sequence belongs to the universal ribosomal protein uS7 family. Part of the 30S ribosomal subunit. Contacts proteins S9 and S11.

In terms of biological role, one of the primary rRNA binding proteins, it binds directly to 16S rRNA where it nucleates assembly of the head domain of the 30S subunit. Is located at the subunit interface close to the decoding center, probably blocks exit of the E-site tRNA. The protein is Small ribosomal subunit protein uS7 of Mycoplasmopsis pulmonis (strain UAB CTIP) (Mycoplasma pulmonis).